A 63-amino-acid polypeptide reads, in one-letter code: 2-hydroxymuconate tautomerase (63 aa).

Residue Pro-2 is the Proton acceptor; via imino nitrogen of the active site.

This sequence belongs to the 4-oxalocrotonate tautomerase family. In terms of assembly, homohexamer.

The catalysed reaction is (2Z,4E)-2-hydroxyhexa-2,4-dienedioate = (3E)-2-oxohex-3-enedioate. It functions in the pathway aromatic compound metabolism; salicylate degradation. Catalyzes the ketonization of 2-hydroxymuconate stereoselectively to yield 2-oxo-3-hexenedioate. In Comamonas testosteroni (Pseudomonas testosteroni), this protein is 2-hydroxymuconate tautomerase (aphI).